The following is a 455-amino-acid chain: Bifunctional protein GlmU (455 aa).

Residues 1 to 226 (MSLDIVILAA…PMEVQGANDR (226 aa)) are pyrophosphorylase. Residues 8–11 (LAAG), Lys22, Gln73, 78–79 (GT), 99–101 (YGD), Gly136, Glu151, Asn166, and Asn224 each bind UDP-N-acetyl-alpha-D-glucosamine. Residue Asp101 participates in Mg(2+) binding. Position 224 (Asn224) interacts with Mg(2+). Positions 227–247 (RQLSELERHYQLREGRRLMAQ) are linker. Residues 248–455 (GVTLRDPARF…WKRPEKTKKS (208 aa)) are N-acetyltransferase. Arg330 and Lys348 together coordinate UDP-N-acetyl-alpha-D-glucosamine. His360 acts as the Proton acceptor in catalysis. Tyr363 and Asn374 together coordinate UDP-N-acetyl-alpha-D-glucosamine. Acetyl-CoA contacts are provided by residues Ala377, 383–384 (NY), Ser402, Ala420, and Arg437.

In the N-terminal section; belongs to the N-acetylglucosamine-1-phosphate uridyltransferase family. The protein in the C-terminal section; belongs to the transferase hexapeptide repeat family. Homotrimer. Requires Mg(2+) as cofactor.

Its subcellular location is the cytoplasm. The enzyme catalyses alpha-D-glucosamine 1-phosphate + acetyl-CoA = N-acetyl-alpha-D-glucosamine 1-phosphate + CoA + H(+). It catalyses the reaction N-acetyl-alpha-D-glucosamine 1-phosphate + UTP + H(+) = UDP-N-acetyl-alpha-D-glucosamine + diphosphate. It functions in the pathway nucleotide-sugar biosynthesis; UDP-N-acetyl-alpha-D-glucosamine biosynthesis; N-acetyl-alpha-D-glucosamine 1-phosphate from alpha-D-glucosamine 6-phosphate (route II): step 2/2. The protein operates within nucleotide-sugar biosynthesis; UDP-N-acetyl-alpha-D-glucosamine biosynthesis; UDP-N-acetyl-alpha-D-glucosamine from N-acetyl-alpha-D-glucosamine 1-phosphate: step 1/1. It participates in bacterial outer membrane biogenesis; LPS lipid A biosynthesis. In terms of biological role, catalyzes the last two sequential reactions in the de novo biosynthetic pathway for UDP-N-acetylglucosamine (UDP-GlcNAc). The C-terminal domain catalyzes the transfer of acetyl group from acetyl coenzyme A to glucosamine-1-phosphate (GlcN-1-P) to produce N-acetylglucosamine-1-phosphate (GlcNAc-1-P), which is converted into UDP-GlcNAc by the transfer of uridine 5-monophosphate (from uridine 5-triphosphate), a reaction catalyzed by the N-terminal domain. This is Bifunctional protein GlmU from Pseudomonas putida (strain GB-1).